A 506-amino-acid polypeptide reads, in one-letter code: Zinc finger and SCAN domain containing protein 4C (506 aa).

Residues methionine 1–serine 24 are disordered. The SCAN box domain maps to serine 37 to cysteine 119. C2H2-type zinc fingers lie at residues tyrosine 395–histidine 417, leucine 424–histidine 446, phenylalanine 452–histidine 474, and tyrosine 480–histidine 503.

As to expression, embryonic stem (ES) cell-specific. Expressed in only 5% of ES cells at a given time, but nearly all ES cells express it at least once during 9 passages.

It localises to the nucleus. It is found in the chromosome. The protein resides in the telomere. Embryonic stem (ES) cell-specific transcription factor required to regulate ES cell pluripotency. Binds telomeres and plays a key role in genomic stability in ES cells by regulating telomere elongation. Acts as an activator of spontaneous telomere sister chromatid exchange (T-SCE) and telomere elongation in undifferentiated ES cells. In Mus musculus (Mouse), this protein is Zinc finger and SCAN domain containing protein 4C (Zscan4c).